We begin with the raw amino-acid sequence, 263 residues long: Apolipoprotein A-I (263 aa).

The signal sequence occupies residues Met1–Ala18. Repeat copies occupy residues Leu66 to Gly87 and Pro88 to Asn109. The 10 X approximate tandem repeats stretch occupies residues Leu66–Gln263. The residue at position 108 (Met108) is a Methionine sulfoxide. Residues Lys110 to Gln120 form a 3; half-length repeat. Tandem repeats lie at residues Pro121–Glu142, Pro143–Thr164, Pro165–Gly186, Pro187–Ser206, and Ala207–Lys228. The 9; half-length repeat unit spans residues Pro229–Leu239. Repeat 10 spans residues Pro240–Gln263.

Belongs to the apolipoprotein A1/A4/E family. In terms of assembly, homodimer. Interacts with APOA1BP and CLU. Component of a sperm activating protein complex (SPAP), consisting of APOA1, an immunoglobulin heavy chain, an immunoglobulin light chain and albumin. Interacts with NDRG1. Interacts with SCGB3A2. Interacts with NAXE and YJEFN3. In terms of processing, glycosylated. Palmitoylated. Post-translationally, phosphorylation sites are present in the extracellular medium.

The protein resides in the secreted. In terms of biological role, participates in the reverse transport of cholesterol from tissues to the liver for excretion by promoting cholesterol efflux from tissues and by acting as a cofactor for the lecithin cholesterol acyltransferase (LCAT). As part of the SPAP complex, activates spermatozoa motility. In Octodon degus (Degu), this protein is Apolipoprotein A-I (APOA1).